A 321-amino-acid polypeptide reads, in one-letter code: Phospholipid phosphatase-related protein type 5 (321 aa).

6 helical membrane-spanning segments follow: residues 10–30 (SSMLYFQMVIMAGTVMLAYYF), 62–82 (AVPPVLLYSLAAGVPVLVIIV), 122–142 (FLGIYTFGLFATDIFVNAGQV), 196–213 (AALSVYAAMYLTMYITNT), 225–245 (VLCLGLMCLAFLTGLNRVAEY), and 252–272 (VIAGFLVGISIAVFLVVCVVN).

This sequence belongs to the PA-phosphatase related phosphoesterase family. Isoform 1 is expressed in brain, lung, kidney and colon. Isoform 2 is expressed in placenta, skeletal muscle and kidney.

The protein resides in the cell membrane. Functionally, induces filopodia formation and promotes neurite growth in a CDC42-independent manner; impedes neurite growth inhibitory-mediated axonal retraction. This is Phospholipid phosphatase-related protein type 5 from Homo sapiens (Human).